A 900-amino-acid chain; its full sequence is MTTNYKTTLLMPKTDFPMKGNLGKNEINIQKHWQKLDLYQKKLQQNQDNNPFILHDGPPYANGNIHMGHALNKILKDFIVRFRSMQGFYTPLIPGWDTHGLPIEAAVLKKTSKNAFTRKPLLDKCQEFALENVNNQKHQFQRLGILGDWQNPYLTLDKTFVSDQVRIFGQMVDKGLIFKALKPIHWSPTLESALAEAELEYHNHQSPSVYVAFSMKKLDIFDNVALVIWTTTPWTLPANVAIAVHPEKEYQLIEVLQKRYLVGTKNIPFLQKVFAWNKENIKVVATFEGKTLEHLTYQNHLVSKFGKIILSQHVLDGEGTGLVHIAPGHGLDDFLVGQKYNLDVVCSIDKKGMMTDVSKYQGLFYTKANEAIISDLEKDHSLLKADVILHSYPHDWRTKKPVISLALPQWFVSIKKIKSLLLEETQKVKWIPRWGELKMTNMITNREDWNISRQRTWGVPIPIFYTETHQPILDLKLINHVADLFEQHGMDIWYEWDVKKLLPENYINPQSPNNLFTKELDIMDVWFDSGTSYSVFKKRNQVLQSDVYLEGSDQYRGWFNSSLITSVATQNQAPYKTVITHGFVFDGEGKKMSKSLGNVIDPLTVAEQKGADIIRLWVANTNYNLDVRINPSILKQVEDLYRKIRNTFRFMLGNLDNFKKDTNYIAFEQRTFIHQAMMLDFEEVLKNVLHSYDTYNFEGVLRHLFPFITNKISAFYLDFAKDILYIEKEDHKERKMIQSTIYDLLLSLLQVLTPIIPHTTSEVYGFFPFAVEKDIYLEKMPQLKARPTSHLLLEYHKFLTLRKNVLQYLEKARQSGLINSSLQAHITLSLTQEEMHALDVLQIKDQLHQLFIVSKVTLQLKDTFDVKVAKASGYACQRCWNVVITKPLTPLCTRCQNILK.

Positions 59–69 (PYANGNIHMGH) match the 'HIGH' region motif. Glu550 contacts L-isoleucyl-5'-AMP. The 'KMSKS' region motif lies at 591–595 (KMSKS). Residue Lys594 coordinates ATP. 4 residues coordinate Zn(2+): Cys876, Cys879, Cys892, and Cys895.

It belongs to the class-I aminoacyl-tRNA synthetase family. IleS type 1 subfamily. As to quaternary structure, monomer. Zn(2+) is required as a cofactor.

It is found in the cytoplasm. It carries out the reaction tRNA(Ile) + L-isoleucine + ATP = L-isoleucyl-tRNA(Ile) + AMP + diphosphate. Catalyzes the attachment of isoleucine to tRNA(Ile). As IleRS can inadvertently accommodate and process structurally similar amino acids such as valine, to avoid such errors it has two additional distinct tRNA(Ile)-dependent editing activities. One activity is designated as 'pretransfer' editing and involves the hydrolysis of activated Val-AMP. The other activity is designated 'posttransfer' editing and involves deacylation of mischarged Val-tRNA(Ile). The sequence is that of Isoleucine--tRNA ligase from Onion yellows phytoplasma (strain OY-M).